The sequence spans 228 residues: UPF0173 metal-dependent hydrolase Dred_1740 (228 aa).

This sequence belongs to the UPF0173 family.

The chain is UPF0173 metal-dependent hydrolase Dred_1740 from Desulforamulus reducens (strain ATCC BAA-1160 / DSM 100696 / MI-1) (Desulfotomaculum reducens).